Consider the following 264-residue polypeptide: Nicotinamide N-methyltransferase (264 aa).

A Citrulline; alternate modification is found at R18. Residues Y20 and Y25 each contribute to the S-adenosyl-L-methionine site. K39 is modified (N6-acetyllysine). S-adenosyl-L-methionine contacts are provided by G63, Y69, D85, and N90. R132 is subject to Citrulline; alternate. S-adenosyl-L-methionine is bound by residues D142–V143 and T163. R181 carries the citrulline; alternate modification. Nicotinamide contacts are provided by D197 and S213.

It belongs to the class I-like SAM-binding methyltransferase superfamily. NNMT/PNMT/TEMT family. In terms of assembly, monomer. In terms of processing, deiminated by PADI1 and PADI2. As to expression, predominantly expressed in the liver. A lower expression is seen in the kidney, lung, skeletal muscle, placenta and heart. Not detected in the brain or pancreas.

It is found in the cytoplasm. The catalysed reaction is nicotinamide + S-adenosyl-L-methionine = 1-methylnicotinamide + S-adenosyl-L-homocysteine. The protein operates within cofactor metabolism. It functions in the pathway amino-acid degradation. With respect to regulation, inactivated by deimination on Arg-132. Catalyzes the N-methylation of nicotinamide using the universal methyl donor S-adenosyl-L-methionine to form N1-methylnicotinamide and S-adenosyl-L-homocysteine, a predominant nicotinamide/vitamin B3 clearance pathway. Plays a central role in regulating cellular methylation potential, by consuming S-adenosyl-L-methionine and limiting its availability for other methyltransferases. Actively mediates genome-wide epigenetic and transcriptional changes through hypomethylation of repressive chromatin marks, such as H3K27me3. In a developmental context, contributes to low levels of the repressive histone marks that characterize pluripotent embryonic stem cell pre-implantation state. Acts as a metabolic regulator primarily on white adipose tissue energy expenditure as well as hepatic gluconeogenesis and cholesterol biosynthesis. In white adipocytes, regulates polyamine flux by consuming S-adenosyl-L-methionine which provides for propylamine group in polyamine biosynthesis, whereas by consuming nicotinamide controls NAD(+) levels through the salvage pathway. Via its product N1-methylnicotinamide regulates protein acetylation in hepatocytes, by repressing the ubiquitination and increasing the stability of SIRT1 deacetylase. Can also N-methylate other pyridines structurally related to nicotinamide and play a role in xenobiotic detoxification. This is Nicotinamide N-methyltransferase from Homo sapiens (Human).